The primary structure comprises 493 residues: MSSAKRSTSRVSKKKAAPAKDGAPKKREQSTRYKYVELNKASLTSAEAQHFYGVVIDATFPYKTNQERYICSLKVVDPSLYLKSQKGTGDASDYATLVLYAKRFEDLPIIHRIGDIIRVHRATLRLYNGQRQFNANVFYNSSWALFSTDKKSALQEIGGQEPASDLTPFAFSGKNYTFEKSEAALLQNIRKWAVQYFQQYNVISSDMFTPLNKAQAQKGDFDVVAKILQVFELDEYTNELKLKDQSGQVFYTLALKLKFPHLRAGEVVRIRSATYDETSTQKKVLLLSHYSNIVTFVSASKLAKEVKAKVTDDKSVEKAALKQDVSLSAVVLTEVDKKHAGLPTHSLQDLFHNADTDKEISSKDTFRTQFYITRVEPVDVKEWVKSYDRKTKKPSSHKGAGAKGGENIFQVQFLVKDASTQLNNNTYRVLLYTQDGLGANFFNVKPDNLYKNNDARKKLEEYNELLTKFNSYVDAVVERRNGFYFIKDTRIIF.

The interval 1–30 (MSSAKRSTSRVSKKKAAPAKDGAPKKREQS) is disordered. The segment covering 7 to 17 (STSRVSKKKAA) has biased composition (basic residues).

It belongs to the telombin family. As to quaternary structure, heterodimer of an alpha and a beta subunit.

It is found in the nucleus. Its subcellular location is the chromosome. It localises to the telomere. Functionally, may function as protective capping of the single-stranded telomeric overhang. May also participate in telomere length regulation during DNA replication. This Stylonychia mytilus (Ciliate) protein is Telomere-binding protein subunit alpha (STY56V).